The chain runs to 65 residues: Keratin-associated protein 20-2 (65 aa).

This sequence belongs to the KRTAP type 20 family. Interacts with hair keratins.

In terms of biological role, in the hair cortex, hair keratin intermediate filaments are embedded in an interfilamentous matrix, consisting of hair keratin-associated proteins (KRTAP), which are essential for the formation of a rigid and resistant hair shaft through their extensive disulfide bond cross-linking with abundant cysteine residues of hair keratins. The matrix proteins include the high-sulfur and high-glycine-tyrosine keratins. The sequence is that of Keratin-associated protein 20-2 (KRTAP20-2) from Homo sapiens (Human).